We begin with the raw amino-acid sequence, 446 residues long: Exodeoxyribonuclease 7 large subunit (446 aa).

The protein belongs to the XseA family. Heterooligomer composed of large and small subunits.

The protein localises to the cytoplasm. The catalysed reaction is Exonucleolytic cleavage in either 5'- to 3'- or 3'- to 5'-direction to yield nucleoside 5'-phosphates.. Its function is as follows. Bidirectionally degrades single-stranded DNA into large acid-insoluble oligonucleotides, which are then degraded further into small acid-soluble oligonucleotides. The protein is Exodeoxyribonuclease 7 large subunit of Xanthomonas campestris pv. campestris (strain B100).